A 304-amino-acid polypeptide reads, in one-letter code: Prephenate dehydratase (304 aa).

The Prephenate dehydratase domain maps to 3–178 (RIAYFGPVGT…ARTRFLLMRR (176 aa)). Positions 193–271 (SIVAAAANRT…DVRFLGSFAR (79 aa)) constitute an ACT domain.

The enzyme catalyses prephenate + H(+) = 3-phenylpyruvate + CO2 + H2O. It functions in the pathway amino-acid biosynthesis; L-phenylalanine biosynthesis; phenylpyruvate from prephenate: step 1/1. In Amycolatopsis methanolica, this protein is Prephenate dehydratase (pheA).